The primary structure comprises 706 residues: Fatty acid oxidation complex subunit alpha (706 aa).

An enoyl-CoA hydratase region spans residues 1-188 (MEKTFNLTRR…KMGLVNDVVP (188 aa)). Positions 308–706 (RKVKKAVILG…TMAQENAHFF (399 aa)) are 3-hydroxyacyl-CoA dehydrogenase.

It in the N-terminal section; belongs to the enoyl-CoA hydratase/isomerase family. The protein in the central section; belongs to the 3-hydroxyacyl-CoA dehydrogenase family. In terms of assembly, heterotetramer of two alpha chains (FadJ) and two beta chains (FadI).

It localises to the cytoplasm. It carries out the reaction a (3S)-3-hydroxyacyl-CoA = a (2E)-enoyl-CoA + H2O. The catalysed reaction is a 4-saturated-(3S)-3-hydroxyacyl-CoA = a (3E)-enoyl-CoA + H2O. The enzyme catalyses a (3S)-3-hydroxyacyl-CoA + NAD(+) = a 3-oxoacyl-CoA + NADH + H(+). It catalyses the reaction (3S)-3-hydroxybutanoyl-CoA = (3R)-3-hydroxybutanoyl-CoA. It functions in the pathway lipid metabolism; fatty acid beta-oxidation. In terms of biological role, catalyzes the formation of a hydroxyacyl-CoA by addition of water on enoyl-CoA. Also exhibits 3-hydroxyacyl-CoA epimerase and 3-hydroxyacyl-CoA dehydrogenase activities. The polypeptide is Fatty acid oxidation complex subunit alpha (Shewanella baltica (strain OS185)).